Reading from the N-terminus, the 148-residue chain is Large ribosomal subunit protein bL9 (148 aa).

The protein belongs to the bacterial ribosomal protein bL9 family.

In terms of biological role, binds to the 23S rRNA. The protein is Large ribosomal subunit protein bL9 of Alkaliphilus oremlandii (strain OhILAs) (Clostridium oremlandii (strain OhILAs)).